Consider the following 101-residue polypeptide: MERPRSPQCSAPASASASVTLAQLLQLVQQGQELPGLEKRHIAAIHGEPTASRLPRRPKPWEAAALAESLPPPTLRIGTAPAEPGLVEAATAPSSWHTVGP.

The protein resides in the peroxisome. Functionally, may be a peroxin involved in the PTS2-mediated protein import pathway. In Homo sapiens (Human), this protein is Peroxisomal biogenesis factor 39.